A 921-amino-acid chain; its full sequence is Isoleucine--tRNA ligase (921 aa).

The 'HIGH' region signature appears at 57 to 67 (PYANGDIHMGH). Glutamate 553 contributes to the L-isoleucyl-5'-AMP binding site. Positions 594 to 598 (KMSKS) match the 'KMSKS' region motif. Lysine 597 lines the ATP pocket.

This sequence belongs to the class-I aminoacyl-tRNA synthetase family. IleS type 1 subfamily. As to quaternary structure, monomer.

It is found in the cytoplasm. It catalyses the reaction tRNA(Ile) + L-isoleucine + ATP = L-isoleucyl-tRNA(Ile) + AMP + diphosphate. Catalyzes the attachment of isoleucine to tRNA(Ile). As IleRS can inadvertently accommodate and process structurally similar amino acids such as valine, to avoid such errors it has two additional distinct tRNA(Ile)-dependent editing activities. One activity is designated as 'pretransfer' editing and involves the hydrolysis of activated Val-AMP. The other activity is designated 'posttransfer' editing and involves deacylation of mischarged Val-tRNA(Ile). This is Isoleucine--tRNA ligase from Bacillus subtilis (strain 168).